The primary structure comprises 344 residues: L-threonine 3-dehydrogenase (344 aa).

A Zn(2+)-binding site is contributed by Cys38. Residues Thr40 and His43 each act as charge relay system in the active site. The Zn(2+) site is built by His63, Glu64, Cys93, Cys96, Cys99, and Cys107. Residues Ile175, Asp195, Arg200, 263 to 265, and 287 to 288 each bind NAD(+); these read LGI and IY.

Belongs to the zinc-containing alcohol dehydrogenase family. Homotetramer. Zn(2+) is required as a cofactor.

It localises to the cytoplasm. The catalysed reaction is L-threonine + NAD(+) = (2S)-2-amino-3-oxobutanoate + NADH + H(+). The protein operates within amino-acid degradation; L-threonine degradation via oxydo-reductase pathway; glycine from L-threonine: step 1/2. Functionally, catalyzes the NAD(+)-dependent oxidation of L-threonine to 2-amino-3-ketobutyrate. The chain is L-threonine 3-dehydrogenase from Deinococcus deserti (strain DSM 17065 / CIP 109153 / LMG 22923 / VCD115).